A 309-amino-acid chain; its full sequence is Taste receptor type 2 member 46 (309 aa).

Methionine 1 is a topological domain (extracellular). The helical transmembrane segment at 2-22 threads the bilayer; the sequence is ITFLPIIFSILIVVTFVIGNF. The Cytoplasmic portion of the chain corresponds to 23–46; that stretch reads ANGFIALANSIEWFKRQKISFADQ. A helical transmembrane segment spans residues 47–67; the sequence is ILTALAVSRVGLLWVLLLNWY. Residues 68-86 are Extracellular-facing; it reads ATELNPAFYSIEVRITAYN. Residues 87–107 form a helical membrane-spanning segment; that stretch reads LWAVINHFSNWLATSLSIFYL. The Cytoplasmic segment spans residues 108 to 126; the sequence is LKIANFSNLIFLCLKRRVK. The chain crosses the membrane as a helical span at residues 127–147; that stretch reads SVVLVILLGPLLFLVCHLFVI. The Extracellular portion of the chain corresponds to 148-178; sequence NMNQIIWTKEYEGNMTWKIKLRSAMYLSNTT. Asparagine 161 and asparagine 176 each carry an N-linked (GlcNAc...) asparagine glycan. Residues 179–199 traverse the membrane as a helical segment; that stretch reads VTILANLVPFTLTLISFLLLI. Residues 200-229 lie on the Cytoplasmic side of the membrane; sequence CSLCKHLEKMQLHGKGSQDPSMKVHIKALQ. Residues 230–250 form a helical membrane-spanning segment; sequence TVTSFLLLCAIYFLSIIMSVW. Residues 251 to 259 are Extracellular-facing; it reads SFESLENKP. A helical transmembrane segment spans residues 260–280; that stretch reads VFMFCEAITFSYPSTHPFILI. Over 281-309 the chain is Cytoplasmic; that stretch reads WGNKKLKQTFLSVLWHVRYWVKGEKPSXP.

Belongs to the G-protein coupled receptor T2R family.

Its subcellular location is the membrane. It is found in the cell projection. It localises to the cilium membrane. Receptor that may play a role in the perception of bitterness and is gustducin-linked. May play a role in sensing the chemical composition of the gastrointestinal content. The activity of this receptor may stimulate alpha gustducin, mediate PLC-beta-2 activation and lead to the gating of TRPM5. In airway epithelial cells, binding of bitter compounds increases the intracellular calcium ion concentration and stimulates ciliary beat frequency. This Pan troglodytes (Chimpanzee) protein is Taste receptor type 2 member 46 (TAS2R46).